Consider the following 503-residue polypeptide: Cytochrome P450 monooxygenase ecdH (503 aa).

The chain crosses the membrane as a helical span at residues 8 to 24 (TTLLCGVISSTLLLLLL). Residues Asn64, Asn324, and Asn413 are each glycosylated (N-linked (GlcNAc...) asparagine). Residue Cys449 participates in heme binding.

It belongs to the cytochrome P450 family. The cofactor is heme.

It localises to the membrane. Its pathway is antifungal biosynthesis. Cytochrome P450 monooxygenase; part of the gene cluster that mediates the biosynthesis of echinocandin B, a fungal lipidated cyclic hexapeptide that acts as an antifungal agent. Linoleoyl-AMP, produced by the fatty-acyl-AMP ligase ecdI, is transferred to the initiation carrier domain (T0) of ecdA. The linoleoyl-S-phosphopantetheinyl-T0 is sequentially extended with L-ornithine, L-threonine, L-proline, L-homotyrosine, L-threonine, and 4R-methyl-L-proline to form the linear hexapeptide. Thereafter, the terminal condensation (C7) performs macrocyclization of the NRPS product and the cyclic scaffold is released from ecdA. All six of the amino acid residues are hydroxylated, including 4R,5R-dihydroxy-L-ornithine, 4R-hydroxyl-L-proline, 3S,4S-dihydroxy-L-homotyrosine, and 3S-hydroxyl-4S-methyl-L-prolin. In the pathway, all the hydroxylation reactions are proposed to occur following completion of the cyclic peptide, so the unhydroxylated precursor produced by ecdA will undergo six rounds of hydroxylation. Five hydroxylase genes (ecdG, ecdH, ecdK, htyE and htyF) are embedded within the echinocandin B (ecd) and L-homotyrosine (hty) clusters. The sequence is that of Cytochrome P450 monooxygenase ecdH from Aspergillus rugulosus (Emericella rugulosa).